Reading from the N-terminus, the 98-residue chain is NADH-ubiquinone oxidoreductase chain 4L (98 aa).

A run of 3 helical transmembrane segments spans residues Met-1–Val-21, His-25–Thr-45, and Ser-57–Val-79.

Belongs to the complex I subunit 4L family. In terms of assembly, core subunit of respiratory chain NADH dehydrogenase (Complex I) which is composed of 45 different subunits.

It localises to the mitochondrion inner membrane. It catalyses the reaction a ubiquinone + NADH + 5 H(+)(in) = a ubiquinol + NAD(+) + 4 H(+)(out). Functionally, core subunit of the mitochondrial membrane respiratory chain NADH dehydrogenase (Complex I) which catalyzes electron transfer from NADH through the respiratory chain, using ubiquinone as an electron acceptor. Part of the enzyme membrane arm which is embedded in the lipid bilayer and involved in proton translocation. The chain is NADH-ubiquinone oxidoreductase chain 4L (MT-ND4L) from Dasyurus hallucatus (Northern quoll).